The sequence spans 156 residues: Small ribosomal subunit protein uS7 (156 aa).

This sequence belongs to the universal ribosomal protein uS7 family. In terms of assembly, part of the 30S ribosomal subunit. Contacts proteins S9 and S11.

Functionally, one of the primary rRNA binding proteins, it binds directly to 16S rRNA where it nucleates assembly of the head domain of the 30S subunit. Is located at the subunit interface close to the decoding center, probably blocks exit of the E-site tRNA. The chain is Small ribosomal subunit protein uS7 from Bacillus cereus (strain B4264).